The primary structure comprises 197 residues: LexA repressor (197 aa).

A DNA-binding region (H-T-H motif) is located at residues 28–47; sequence VREIARRFRITPRGALLHLI. Active-site for autocatalytic cleavage activity residues include Ser-119 and Lys-156.

The protein belongs to the peptidase S24 family. In terms of assembly, homodimer.

The catalysed reaction is Hydrolysis of Ala-|-Gly bond in repressor LexA.. In terms of biological role, represses a number of genes involved in the response to DNA damage (SOS response), including recA and lexA. In the presence of single-stranded DNA, RecA interacts with LexA causing an autocatalytic cleavage which disrupts the DNA-binding part of LexA, leading to derepression of the SOS regulon and eventually DNA repair. This is LexA repressor from Thermotoga petrophila (strain ATCC BAA-488 / DSM 13995 / JCM 10881 / RKU-1).